Consider the following 108-residue polypeptide: Nucleoid-associated protein Mpe_A2533 (108 aa).

Positions 86-108 (TSEEKMGKLTAGMPLPPGMKLPF) are disordered. Pro residues predominate over residues 99–108 (PLPPGMKLPF).

The protein belongs to the YbaB/EbfC family. In terms of assembly, homodimer.

It localises to the cytoplasm. Its subcellular location is the nucleoid. Binds to DNA and alters its conformation. May be involved in regulation of gene expression, nucleoid organization and DNA protection. This is Nucleoid-associated protein Mpe_A2533 from Methylibium petroleiphilum (strain ATCC BAA-1232 / LMG 22953 / PM1).